We begin with the raw amino-acid sequence, 567 residues long: Urease subunit alpha (567 aa).

One can recognise a Urease domain in the interval 130–567 (GGIDTHIHFI…LPLAQRYFLF (438 aa)). Positions 135, 137, and 218 each coordinate Ni(2+). An N6-carboxylysine modification is found at Lys-218. Residue His-220 coordinates substrate. Ni(2+) contacts are provided by His-247 and His-273. His-321 functions as the Proton donor in the catalytic mechanism. Position 361 (Asp-361) interacts with Ni(2+).

This sequence belongs to the metallo-dependent hydrolases superfamily. Urease alpha subunit family. As to quaternary structure, heterotrimer of UreA (gamma), UreB (beta) and UreC (alpha) subunits. Three heterotrimers associate to form the active enzyme. It depends on Ni cation as a cofactor. Carboxylation allows a single lysine to coordinate two nickel ions.

The protein resides in the cytoplasm. It catalyses the reaction urea + 2 H2O + H(+) = hydrogencarbonate + 2 NH4(+). The protein operates within nitrogen metabolism; urea degradation; CO(2) and NH(3) from urea (urease route): step 1/1. The protein is Urease subunit alpha of Methylobacillus flagellatus (strain ATCC 51484 / DSM 6875 / VKM B-1610 / KT).